Consider the following 329-residue polypeptide: DGAT1/2-independent enzyme synthesizing storage lipids (329 aa).

At 1–50 the chain is on the lumenal side; the sequence is MIDNNQTCAAGQDSVPYVTCMIYVLEEWLGVEQLEDYLNFANHLLWVFTP. The N-linked (GlcNAc...) asparagine glycan is linked to N5. Residues 51 to 71 traverse the membrane as a helical segment; sequence LILLILPYFTIFLLYLTIIFL. Topologically, residues 72–120 are cytoplasmic; that stretch reads HIYKRKNVLKEAYSHNLWDGARKTVATLWDGHAAVWHGYEVHGMEKIPE. A helical transmembrane segment spans residues 121–141; the sequence is GAALIIFYHGAIPIDFYYFMA. The active site involves H129. The Lumenal segment spans residues 142-329; that stretch reads KIFIQKGRTC…DRFHKEQKAH (188 aa).

The protein belongs to the diacylglycerol acyltransferase family. Highly divergent. In terms of tissue distribution, widely expressed, with highest level in the brain, followed by lung and duodenum, and lowest levels in tongue, testis, skin and ileum.

It localises to the endoplasmic reticulum membrane. It catalyses the reaction a 1,2-diacylglycerol + a 1,2-diacyl-sn-glycero-3-phosphocholine = a triacylglycerol + a 1-acyl-sn-glycero-3-phosphocholine. The catalysed reaction is a 1-O-alkyl-2-acyl-sn-glycero-3-phosphocholine + a 1,2-diacylglycerol = a 1-O-alkyl-sn-glycero-3-phosphocholine + a triacylglycerol. The enzyme catalyses a 2-acylglycerol + an acyl-CoA = a 1,2-diacylglycerol + CoA. It carries out the reaction an acyl-CoA + a 1,2-diacyl-sn-glycerol = a triacyl-sn-glycerol + CoA. It catalyses the reaction 2-(9Z-octadecenoyl)-glycerol + (9Z)-octadecenoyl-CoA = 1,2-di-(9Z-octadecenoyl)-glycerol + CoA. The catalysed reaction is 1,2-di-(9Z-octadecenoyl)-sn-glycerol + (9Z)-octadecenoyl-CoA = 1,2,3-tri-(9Z-octadecenoyl)-glycerol + CoA. Its activity is regulated as follows. Acyltransferase activity is specifically inhibited by TMX1 at the endoplasmic reticulum, restricting accumulation of triacylglycerol. Catalytic subunit of the alternative triglyceride biosynthesis pathway, which mediates formation of triacylglycerol from diacylglycerol and membrane phospholipids. Synthesizes triacylglycerol at the expense of membrane phospholipids, such as phosphatidylcholine (PC) and its ether-linked form (ePC), thereby altering the composition of membranes. The alternative triglyceride biosynthesis pathway is probably required to provide the energy required for rapid growth when fuel sources are limiting. It maintains mitochondrial function during periods of extracellular lipid starvation. Can also use acyl-CoA as donor: acts as a acyl-CoA:monoacylglycerol acyltransferase (MGAT), but also shows acyl-CoA:diacylglycerol acyltransferase (DGAT) activity. The protein is DGAT1/2-independent enzyme synthesizing storage lipids of Mus musculus (Mouse).